The chain runs to 490 residues: Pleckstrin homology domain-containing family O member 2 (490 aa).

In terms of domain architecture, PH spans methionine 18–asparagine 119. Residues serine 164 and serine 167 each carry the phosphoserine modification. The segment at leucine 173–proline 402 is disordered. Residues alanine 230–glutamate 243 show a composition bias toward low complexity. Threonine 232 is subject to Phosphothreonine. A phosphoserine mark is found at serine 235, serine 237, and serine 238. Positions serine 244–glycine 257 are enriched in acidic residues. A Phosphoserine modification is found at serine 273. Residues proline 277 to glutamate 297 show a composition bias toward low complexity. 2 positions are modified to phosphothreonine: threonine 298 and threonine 311. Residues serine 390 and serine 468 each carry the phosphoserine modification. Residues serine 439 to leucine 481 are a coiled coil.

This is Pleckstrin homology domain-containing family O member 2 (PLEKHO2) from Homo sapiens (Human).